We begin with the raw amino-acid sequence, 187 residues long: Ribosome-recycling factor (187 aa).

This sequence belongs to the RRF family.

It localises to the cytoplasm. Its function is as follows. Responsible for the release of ribosomes from messenger RNA at the termination of protein biosynthesis. May increase the efficiency of translation by recycling ribosomes from one round of translation to another. The chain is Ribosome-recycling factor from Ruegeria sp. (strain TM1040) (Silicibacter sp.).